We begin with the raw amino-acid sequence, 140 residues long: Zinc finger SWIM domain-containing protein 7 (140 aa).

The SWIM-type zinc finger occupies 76-114; the sequence is YTCFTSCHYCPCPAFSFTVLRRNESLMCKHLLAVILSQA.

The protein belongs to the SWS1 family.

Its subcellular location is the nucleus. In terms of biological role, involved in early stages of the homologous recombination repair (HRR) pathway of double-stranded DNA breaks arising during DNA replication or induced by DNA-damaging agents. This chain is Zinc finger SWIM domain-containing protein 7 (zswim7), found in Danio rerio (Zebrafish).